A 436-amino-acid polypeptide reads, in one-letter code: Chorion-specific transcription factor GCMa (436 aa).

The segment at residues 14-169 is a DNA-binding region (GCM); it reads LSWDINDMKL…KLEAEARRAM (156 aa). Residues Cys76, Cys82, Cys86, Cys113, Cys116, Cys125, His152, and His154 each coordinate Zn(2+).

Post-translationally, polyubiquitinated in the presence of UBE2D2 and FBXW2 (in vitro).

The protein resides in the nucleus. Functionally, transcription factor involved in the control of expression of placental growth factor (PGF) and other placenta-specific genes. Binds to the trophoblast-specific element 2 (TSE2) of the aromatase gene enhancer. Binds to the SYDE1 promoter. Has a central role in mediating the differentiation of trophoblast cells along both the villous and extravillous pathways in placental development. The chain is Chorion-specific transcription factor GCMa (Gcm1) from Rattus norvegicus (Rat).